The following is a 273-amino-acid chain: Dermonecrotic toxin (273 aa).

Residues Glu-20 and Asp-22 each coordinate Mg(2+). The Nucleophile role is filled by His-35. Residues Cys-39 and Cys-45 are joined by a disulfide bond. Asp-79 is a Mg(2+) binding site.

This sequence belongs to the arthropod phospholipase D family. Class I subfamily. The cofactor is Mg(2+). As to expression, expressed by the venom gland.

Its subcellular location is the secreted. The enzyme catalyses an N-(acyl)-sphingosylphosphocholine = an N-(acyl)-sphingosyl-1,3-cyclic phosphate + choline. It carries out the reaction an N-(acyl)-sphingosylphosphoethanolamine = an N-(acyl)-sphingosyl-1,3-cyclic phosphate + ethanolamine. It catalyses the reaction a 1-acyl-sn-glycero-3-phosphocholine = a 1-acyl-sn-glycero-2,3-cyclic phosphate + choline. The catalysed reaction is a 1-acyl-sn-glycero-3-phosphoethanolamine = a 1-acyl-sn-glycero-2,3-cyclic phosphate + ethanolamine. Dermonecrotic toxins cleave the phosphodiester linkage between the phosphate and headgroup of certain phospholipids (sphingolipid and lysolipid substrates), forming an alcohol (often choline) and a cyclic phosphate. This toxin acts on sphingomyelin (SM). It may also act on ceramide phosphoethanolamine (CPE), lysophosphatidylcholine (LPC) and lysophosphatidylethanolamine (LPE), but not on lysophosphatidylserine (LPS), and lysophosphatidylglycerol (LPG). It acts by transphosphatidylation, releasing exclusively cyclic phosphate products as second products. Induces dermonecrosis, hemolysis, increased vascular permeability, edema, inflammatory response, and platelet aggregation. In Loxosceles laeta (South American recluse spider), this protein is Dermonecrotic toxin.